A 102-amino-acid chain; its full sequence is Carboxysome shell protein CsoS1C (102 aa).

In terms of domain architecture, BMC spans 8 to 93 (ALGMIETRGL…PHKEVEPVLA (86 aa)).

It belongs to the bacterial microcompartments protein family. CsoS1 subfamily. As to quaternary structure, homohexamer with a small central pore.

The protein resides in the carboxysome. One of shell proteins of the carboxysome, a polyhedral inclusion where RuBisCO (ribulose bisphosphate carboxylase, ccbL-ccbS) is sequestered. Assembles into hexamers which make sheets that form the facets of the polyhedral carboxysome. The shell probably limits the diffusion of CO(2) into and out of the carboxysome. The sequence is that of Carboxysome shell protein CsoS1C from Hydrogenovibrio crunogenus (strain DSM 25203 / XCL-2) (Thiomicrospira crunogena).